The sequence spans 65 residues: MPKMKTKSGAAKRFTVRAGGTVKRSQAFKRHILTKKTTKSKRQLRGSVNVHFSDVASVRAMMPYA.

Residues 1-21 form a disordered region; sequence MPKMKTKSGAAKRFTVRAGGT.

It belongs to the bacterial ribosomal protein bL35 family.

The chain is Large ribosomal subunit protein bL35 from Nitrosospira multiformis (strain ATCC 25196 / NCIMB 11849 / C 71).